The sequence spans 283 residues: MGLAKQKDSQEFAQPVWHYTLAGGISSVICRFMIAPFDVIKIRMQITQSSLRPVFKETVQKEGVRALWRGNVVAELLYLVYGAAEFVAFSKLKHLTENLAMNDHAVNFLCGTSAGIFATLTSYPLDTMRTKFASYAKTPHMLPATKKIYAEAGIKGFFPGLKFSVIQIGPYAGCFFMFYRASEAVLSPLGLALSSTLSGVIAGAGSKAIMFPVDTVVKTLQTFPSNYKSFKDCFLSIYRNSGIKGLYRGLSVSMLKVAPGRAITMLIYEQTLQGLRTLSSPEA.

Solcar repeat units follow at residues 14-95, 102-185, and 190-274; these read QPVW…LKHL, NDHA…SEAV, and GLAL…TLQG. Helical transmembrane passes span 20 to 40, 70 to 90, 105 to 125, 157 to 177, 184 to 204, and 249 to 266; these read TLAG…FDVI, GNVV…VAFS, AVNF…SYPL, FFPG…CFFM, AVLS…IAGA, and GLSV…ITML.

This sequence belongs to the mitochondrial carrier (TC 2.A.29) family.

The protein resides in the mitochondrion inner membrane. This is an uncharacterized protein from Schizosaccharomyces pombe (strain 972 / ATCC 24843) (Fission yeast).